Consider the following 533-residue polypeptide: MNEENIDGTNGCSKVRTGIQNEAALLALMEKTGYNMVQENGQRKFGGPPPGWEGPPPPRGCEVFVGKIPRDMYEDELVPVFERAGKIYEFRLMMEFSGENRGYAFVMYTTKEEAQLAIRILNNYEIRPGKFIGVCVSLDNCRLFIGAIPKEKKKEEILDEMKKVTEGVVDVIVYPSATDKTKNRGFAFVEYESHRAAAMARRKLIPGTFQLWGHTIQVDWADPEKEVDEETMQRVKVLYVRNLMISTTEETIKAEFNKFKPGAVERVKKLRDYAFVHFFNREDAVAAMSVMNGKCIDGASIEVTLAKPVNKENTWRQHLNGQISPNSENLIVFANKEESHPKTLGKLPTLPARLNGQHSPSPPEVERCTYPFYPGTKLTPISMYSLKSNHFNSAVMHLDYYCNKNNWAPPEYYLYSTTSQDGKVLLVYKIVIPAIANGSQSYFMPDKLCTTLEDAKELAAQFTLLHLDYNFHRSSINSLSPVSATLSSGTPSVLPYTSRPYSYPGYPLSPTISLANGSHVGQRLCISNQASFF.

3 RRM domains span residues 61-139 (CEVF…VSLD), 141-223 (CRLF…WADP), and 236-308 (KVLY…LAKP).

Interacts with YTHDC2, MEIOC, MOV10, CNOT6L, DDX4, UPF1 and PABPC1.

The protein resides in the cytoplasm. Its function is as follows. Essential for male and female fertility, playing a crucial role in regulating germ cell development by ensuring the proper progression of meiosis prophase I. Regulates mitotic-to-meiotic transition in spermatogenesis by forming a complex with MEIOC and YTHDC2 which recognizes and down-regulates mitotic transcripts for a successful meiotic entry. Required for normal synaptonemal complex formation during meiosis, binding meiotic cohesin subunit mRNAs containing GCCUAU/GUUCGA motifs in their 3'UTRs regions and positively regulating their translation. Required for spermatogonial differentiation in both developing and adult testis. The polypeptide is Probable RNA-binding protein 46 (RBM46) (Homo sapiens (Human)).